Reading from the N-terminus, the 764-residue chain is MTPQVDTVSAAAATPDVAQPYKELGLKDDEYARIKEILGRRPTDAELAMYSVMWSEHCSYKSSKVHLRYFGETTTEEMRKSMLAGIGENAGVVDVGDGWAVTFKVESHNHPSYVEPYQGAATGVGGIVRDIMAMGARPVAVMDQLRFGAADHPDTRRVVDGVVRGIGGYGNSLGLPNVGGETVFDASYQGNPLVNALCAGVMRVEDLHLAFASGTGNKIILFGARTGLDGIGGVSVLASDTFSGDESGAGRKKLPSVQVGDPFTEKVLIECCLELYAAKLVVGIQDLGGAGLSCATSELAAAGDGGMRIELDKVPLRAADMTPAEILSSESQERMCAVVTPENVEAFMAVCRKWDVLATVIGEVTDGDRLVVTWHGETVVDVPPRTVAHEGPVYERPVQRPDYQDALIADTPDTLPRPATADELRETLLRMISSPQLCSRKWITEQYDRYVRGNTVLAEDADAGVIRIDEQTGRGIALATDASGRYTKLDPYAGAQLALAEAFRNVASTGATPKAVTNCLNFGSPEDPGVMWQFQQAVRGLADGCVALGIPVTGGNVSFYNQTGQDAILPTPVVGVLGVIDDVHRRIPTGIGLEPGETLILLGDTRDEFGGSIWAQVVHDHLGGVPPKVDFAREQLLAEVLTAGSRDGMISAAHDLSEGGLAQAVVEAALAGETGCRILLPEDADPFVTLFSESAGRVLVAVPRSEETRFTRMCEARQLPWVRIGVVDQGSDALEVQGHFSIPLTELRAAFEGTLPKLFGAETA.

Residue His57 is part of the active site. ATP is bound by residues Tyr60 and Lys104. Residue Glu106 coordinates Mg(2+). Substrate is bound by residues 107-110 (SHNH) and Arg129. The Proton acceptor role is filled by His108. Position 130 (Asp130) interacts with Mg(2+). Gln258 provides a ligand contact to substrate. Asp286 is a Mg(2+) binding site. Residue 330 to 332 (ESQ) participates in substrate binding. The ATP site is built by Asn518 and Gly555. Position 556 (Asn556) interacts with Mg(2+). Ser558 lines the substrate pocket.

Belongs to the FGAMS family. Monomer. Part of the FGAM synthase complex composed of 1 PurL, 1 PurQ and 2 PurS subunits.

It is found in the cytoplasm. The enzyme catalyses N(2)-formyl-N(1)-(5-phospho-beta-D-ribosyl)glycinamide + L-glutamine + ATP + H2O = 2-formamido-N(1)-(5-O-phospho-beta-D-ribosyl)acetamidine + L-glutamate + ADP + phosphate + H(+). It functions in the pathway purine metabolism; IMP biosynthesis via de novo pathway; 5-amino-1-(5-phospho-D-ribosyl)imidazole from N(2)-formyl-N(1)-(5-phospho-D-ribosyl)glycinamide: step 1/2. Part of the phosphoribosylformylglycinamidine synthase complex involved in the purines biosynthetic pathway. Catalyzes the ATP-dependent conversion of formylglycinamide ribonucleotide (FGAR) and glutamine to yield formylglycinamidine ribonucleotide (FGAM) and glutamate. The FGAM synthase complex is composed of three subunits. PurQ produces an ammonia molecule by converting glutamine to glutamate. PurL transfers the ammonia molecule to FGAR to form FGAM in an ATP-dependent manner. PurS interacts with PurQ and PurL and is thought to assist in the transfer of the ammonia molecule from PurQ to PurL. This is Phosphoribosylformylglycinamidine synthase subunit PurL from Nocardia farcinica (strain IFM 10152).